The following is a 343-amino-acid chain: Phosphoglycerate mutase-like protein 2 (343 aa).

A chloroplast-targeting transit peptide spans 1-35 (MIHQSMTSNLSFYISSVSHLSSPLPSLSRLSLRCC). His-65 functions as the Tele-phosphohistidine intermediate in the catalytic mechanism. Glu-177 (proton donor/acceptor) is an active-site residue. Residues 322–343 (MTNYPGTILTGEDASSDIADQK) are disordered.

It belongs to the phosphoglycerate mutase family.

The protein resides in the plastid. The protein localises to the chloroplast. Its function is as follows. May play a role in carbohydrates metabolism. The protein is Phosphoglycerate mutase-like protein 2 of Arabidopsis thaliana (Mouse-ear cress).